A 438-amino-acid polypeptide reads, in one-letter code: Chromosomal replication initiator protein DnaA (438 aa).

A domain I, interacts with DnaA modulators region spans residues Met-1–Gln-71. Positions Gln-71–Thr-101 are domain II. Residues Thr-81–Glu-100 are disordered. The tract at residues Pro-102 to Ser-318 is domain III, AAA+ region. The ATP site is built by Gly-146, Gly-148, Lys-149, and Thr-150. The segment at Glu-319–Ala-438 is domain IV, binds dsDNA.

Belongs to the DnaA family. As to quaternary structure, oligomerizes as a right-handed, spiral filament on DNA at oriC.

It localises to the cytoplasm. Its function is as follows. Plays an essential role in the initiation and regulation of chromosomal replication. ATP-DnaA binds to the origin of replication (oriC) to initiate formation of the DNA replication initiation complex once per cell cycle. Binds the DnaA box (a 9 base pair repeat at the origin) and separates the double-stranded (ds)DNA. Forms a right-handed helical filament on oriC DNA; dsDNA binds to the exterior of the filament while single-stranded (ss)DNA is stabiized in the filament's interior. The ATP-DnaA-oriC complex binds and stabilizes one strand of the AT-rich DNA unwinding element (DUE), permitting loading of DNA polymerase. After initiation quickly degrades to an ADP-DnaA complex that is not apt for DNA replication. Binds acidic phospholipids. The sequence is that of Chromosomal replication initiator protein DnaA from Limosilactobacillus fermentum (strain NBRC 3956 / LMG 18251) (Lactobacillus fermentum).